The following is a 274-amino-acid chain: HTH-type transcriptional regulator GadX (274 aa).

Residues 145-242 (TRVCTVINNN…GMTPTEYQER (98 aa)) form the HTH araC/xylS-type domain. 2 DNA-binding regions (H-T-H motif) span residues 162-183 (ARIASELLMSPSLLKKKLREEG) and 209-232 (IKRVAVSCGYHSVSYFIYVFRNYY).

As to quaternary structure, homodimer.

In terms of biological role, positively regulates the expression of about fifteen genes involved in acid resistance such as gadA, gadB and gadC. Depending on the conditions (growth phase and medium), can repress gadW. The chain is HTH-type transcriptional regulator GadX (gadX) from Escherichia coli O6:H1 (strain CFT073 / ATCC 700928 / UPEC).